The following is a 51-amino-acid chain: Sperm protamine P1 (51 aa).

This sequence belongs to the protamine P1 family. In terms of tissue distribution, testis.

The protein resides in the nucleus. It is found in the chromosome. Protamines substitute for histones in the chromatin of sperm during the haploid phase of spermatogenesis. They compact sperm DNA into a highly condensed, stable and inactive complex. The chain is Sperm protamine P1 (PRM1) from Trachypithecus johnii (Nilgiri langur).